The following is an 89-amino-acid chain: Mapacalcine (89 aa).

Gln89 is modified (glutamine amide).

In terms of assembly, homodimer. In terms of processing, contains disulfide bonds which may also be involved in dimerization.

Its function is as follows. Blocks calcium currents via interaction with a yet unknown target protein. Has no effect on L-type, T-type, N-type or P/Q-type voltage-gated calcium channels (VGCC). Has no effect on voltage-gated potassium or chloride channels. Blocks non-L-type VGCC calcium currents in mouse duodenal myocytes (IC(50)=0.2 uM). Blocks calcium influx induced by hypoxia/reoxygenation in rat hepatocytes. The protein is Mapacalcine of Pione vastifica (Boring sponge).